Here is a 482-residue protein sequence, read N- to C-terminus: Adenylosuccinate lyase (482 aa).

Residues 14–15, 82–84, and 108–109 each bind substrate; these read RY, RHD, and TS. H156 serves as the catalytic Proton donor/acceptor. Residue K196 forms a Glycyl lysine isopeptide (Lys-Gly) (interchain with G-Cter in ubiquitin) linkage. Residue Q238 participates in substrate binding. Residue S286 is the Proton donor/acceptor of the active site. Substrate is bound by residues R300, R326, S331, and R335.

It belongs to the lyase 1 family. Adenylosuccinate lyase subfamily. As to quaternary structure, homotetramer. Residues from neighboring subunits contribute catalytic and substrate-binding residues to each active site.

It catalyses the reaction N(6)-(1,2-dicarboxyethyl)-AMP = fumarate + AMP. The enzyme catalyses (2S)-2-[5-amino-1-(5-phospho-beta-D-ribosyl)imidazole-4-carboxamido]succinate = 5-amino-1-(5-phospho-beta-D-ribosyl)imidazole-4-carboxamide + fumarate. It participates in purine metabolism; AMP biosynthesis via de novo pathway; AMP from IMP: step 2/2. It functions in the pathway purine metabolism; IMP biosynthesis via de novo pathway; 5-amino-1-(5-phospho-D-ribosyl)imidazole-4-carboxamide from 5-amino-1-(5-phospho-D-ribosyl)imidazole-4-carboxylate: step 2/2. The polypeptide is Adenylosuccinate lyase (ADE13) (Saccharomyces cerevisiae (strain ATCC 204508 / S288c) (Baker's yeast)).